We begin with the raw amino-acid sequence, 235 residues long: Small ribosomal subunit protein uS3 (235 aa).

The 69-residue stretch at 39–107 (VRKFLNKELA…PAQINIAEVK (69 aa)) folds into the KH type-2 domain. Residues 215 to 235 (AQSEQQPADKPKKAPRGKGRK) form a disordered region.

Belongs to the universal ribosomal protein uS3 family. As to quaternary structure, part of the 30S ribosomal subunit. Forms a tight complex with proteins S10 and S14.

Its function is as follows. Binds the lower part of the 30S subunit head. Binds mRNA in the 70S ribosome, positioning it for translation. This Haemophilus influenzae (strain PittEE) protein is Small ribosomal subunit protein uS3.